A 924-amino-acid chain; its full sequence is MITGLLKKVFGSRNERLIKQYRRTVEQINALEPKFEQLSDDQLRGMTETFRQRHAGGESLESLLPEAFAVCREASKRIMKMRHFDVQLIGGMVLNDNKIAEMRTGEGKTLTATLAVYLNAITGKGVHVVTVNDYLAQRDAEWMGRLYNYLGLSVGVNLSQMAHDQKQAAYNADITYGTNNEFGFDYLRDNMVYDPSQRVQRPLNYAIVDEVDSILIDEARTPLIISGQAENHTDLYQRMNGIPRLLERQIGEEKADGTGVEKPGDYYVDEKGHQVYLTEAGHEKAEEILAQQGLIGEGESLYAPQNITLMHHLYAALRAHSLFHRDQHYVVQNDEVVIVDEFTGRLMTGRRWSDGLHQAVEAKEGVSIQQENQTLATITFQNYFRMYTKLAGMTGTADTEAYEFQEIYGLEVVVIPTNRAAQRKDLQDQIYKTSKERYDAVVRDIRDCYDRGQPVLVGTTSIETSEYLSDLLNKEKLPHQVLNAKQHEREAEIVAQAGRPKMITIATNMAGRGTDIVLGGNVEKQAGFVEIDPNLSDADKAARIQQLKDEWQSLHEQVKSFGGLHIVGTERHESRRIDNQLRGRAGRQGDPGSSRFYLSLDDQLLRIFAGDRVRAIMERLKMPEGEPIEAGIVTRSIESAQRKVEGRNFDIRKQLLQYDDVANDQRKEIYKLRNDVLEANDVGEMVKNLRESVLIELFREHVAADTMEEQWDIAGLETRLREDWGLELPLAKTIEGAQSIEDEALLDMILKAAEERYEGKVAMVGRESFAGFERSVMLQSIDSHWREHLAALDHLRQGIHLRGYAQKDPKQEYKRESFELFARLLDVIKNEVTRVTFNVQIQSPEELEQASEQIEEGLSHLENVQYKHDEFAEGREPVEDAPSLRTGAAVAAEMAVAGMPKVGRNDPCPCGSGKKFKQCHGKLS.

ATP contacts are provided by residues glutamine 87, 105–109 (GEGKT), and aspartate 515. Cysteine 908, cysteine 910, cysteine 919, and histidine 920 together coordinate Zn(2+).

Belongs to the SecA family. In terms of assembly, monomer and homodimer. Part of the essential Sec protein translocation apparatus which comprises SecA, SecYEG and auxiliary proteins SecDF-YajC and YidC. Requires Zn(2+) as cofactor.

It localises to the cell inner membrane. The protein localises to the cytoplasm. It catalyses the reaction ATP + H2O + cellular proteinSide 1 = ADP + phosphate + cellular proteinSide 2.. In terms of biological role, part of the Sec protein translocase complex. Interacts with the SecYEG preprotein conducting channel. Has a central role in coupling the hydrolysis of ATP to the transfer of proteins into and across the cell membrane, serving both as a receptor for the preprotein-SecB complex and as an ATP-driven molecular motor driving the stepwise translocation of polypeptide chains across the membrane. In Cupriavidus pinatubonensis (strain JMP 134 / LMG 1197) (Cupriavidus necator (strain JMP 134)), this protein is Protein translocase subunit SecA.